A 478-amino-acid polypeptide reads, in one-letter code: Bifunctional protein HldE (478 aa).

A ribokinase region spans residues 1-318 (MKITLPDFTR…ENAIHARPES (318 aa)). Position 195–198 (195–198 (NLSE)) interacts with ATP. Aspartate 264 is a catalytic residue. The interval 344–478 (MTNGVFDILH…KTIISGSGKN (135 aa)) is cytidylyltransferase.

This sequence in the N-terminal section; belongs to the carbohydrate kinase PfkB family. The protein in the C-terminal section; belongs to the cytidylyltransferase family. As to quaternary structure, homodimer.

The catalysed reaction is D-glycero-beta-D-manno-heptose 7-phosphate + ATP = D-glycero-beta-D-manno-heptose 1,7-bisphosphate + ADP + H(+). It carries out the reaction D-glycero-beta-D-manno-heptose 1-phosphate + ATP + H(+) = ADP-D-glycero-beta-D-manno-heptose + diphosphate. Its pathway is nucleotide-sugar biosynthesis; ADP-L-glycero-beta-D-manno-heptose biosynthesis; ADP-L-glycero-beta-D-manno-heptose from D-glycero-beta-D-manno-heptose 7-phosphate: step 1/4. It participates in nucleotide-sugar biosynthesis; ADP-L-glycero-beta-D-manno-heptose biosynthesis; ADP-L-glycero-beta-D-manno-heptose from D-glycero-beta-D-manno-heptose 7-phosphate: step 3/4. Its function is as follows. Catalyzes the phosphorylation of D-glycero-D-manno-heptose 7-phosphate at the C-1 position to selectively form D-glycero-beta-D-manno-heptose-1,7-bisphosphate. In terms of biological role, catalyzes the ADP transfer from ATP to D-glycero-beta-D-manno-heptose 1-phosphate, yielding ADP-D-glycero-beta-D-manno-heptose. This is Bifunctional protein HldE from Erwinia tasmaniensis (strain DSM 17950 / CFBP 7177 / CIP 109463 / NCPPB 4357 / Et1/99).